A 1134-amino-acid polypeptide reads, in one-letter code: Tetrathionate reductase subunit A (1134 aa).

A signal peptide (tat-type signal) is located at residues 1–31; sequence MQLSRRDFIKGLVAVGSASVFLAGYSETVDR. The 88-residue stretch at 46 to 133 folds into the 4Fe-4S Mo/W bis-MGD-type domain; it reads GRIVHSACLG…DGIHYLYDPY (88 aa). Positions 53, 56, 60, and 119 each coordinate [4Fe-4S] cluster.

Belongs to the prokaryotic molybdopterin-containing oxidoreductase family. As to quaternary structure, probably composed of three subunits: TtrA, TtrB and TtrC. Precursor interacts with TtrD. [4Fe-4S] cluster serves as cofactor. Requires Mo-bis(molybdopterin guanine dinucleotide) as cofactor. Exported by the Tat system. The position of the signal peptide cleavage has not been experimentally proven.

Its subcellular location is the cell membrane. Its function is as follows. Part of a membrane-bound tetrathionate reductase that catalyzes the reduction of tetrathionate to thiosulfate. TtrA is the catalytic subunit. The polypeptide is Tetrathionate reductase subunit A (ttrA) (Archaeoglobus fulgidus (strain ATCC 49558 / DSM 4304 / JCM 9628 / NBRC 100126 / VC-16)).